The primary structure comprises 198 residues: Angiopoietin-like protein 8 (198 aa).

The signal sequence occupies residues 1 to 21 (MPVPALCLLWALAMVTRPASA).

It belongs to the ANGPTL8 family. In terms of assembly, interacts with ANGPTL3. In terms of processing, proteolytically cleaved at the N-terminus. Predominantly expressed in liver. Also expressed in adipose tissues.

The protein localises to the secreted. Hormone that acts as a blood lipid regulator by regulating serum triglyceride levels. May be involved in the metabolic transition between fasting and refeeding: required to direct fatty acids to adipose tissue for storage in the fed state. This chain is Angiopoietin-like protein 8, found in Homo sapiens (Human).